The chain runs to 305 residues: tRNA dimethylallyltransferase 2 (305 aa).

G14–T21 provides a ligand contact to ATP. T16–T21 is a binding site for substrate. The tract at residues D39–Q42 is interaction with substrate tRNA.

It belongs to the IPP transferase family. Monomer. It depends on Mg(2+) as a cofactor.

The catalysed reaction is adenosine(37) in tRNA + dimethylallyl diphosphate = N(6)-dimethylallyladenosine(37) in tRNA + diphosphate. Catalyzes the transfer of a dimethylallyl group onto the adenine at position 37 in tRNAs that read codons beginning with uridine, leading to the formation of N6-(dimethylallyl)adenosine (i(6)A). The chain is tRNA dimethylallyltransferase 2 from Trichlorobacter lovleyi (strain ATCC BAA-1151 / DSM 17278 / SZ) (Geobacter lovleyi).